The chain runs to 165 residues: Protein NKG7 (165 aa).

4 consecutive transmembrane segments (helical) span residues 9–29 (LLTS…NFWF), 61–81 (FCIL…MSCI), 92–112 (IVST…MTVY), and 133–153 (FYLG…SLGA).

This sequence belongs to the PMP-22/EMP/MP20 family.

Its subcellular location is the cell membrane. The protein localises to the cytolytic granule membrane. Functionally, regulates cytotoxic granule exocytosis in effector lymphocytes, thus acting as a critical mediator of inflammation in a broad range of infectious and non-infectious diseases. Essential for cytotoxic degranulation of natural killer (NK) cells and CD8(+) T-cells and for the activation of CD4(+) T-cells following infection. Plays a critical role in CD8(+) T-cell and NK cell-mediated cytolysis of target cells and contributes to the cytolytic activity via the perforin/granzyme pathway by enhancing exocytosis of LAMP1-carrying lytic granules. Contributes to NK cell-mediated control of cancer metastasis. The sequence is that of Protein NKG7 (NKG7) from Bos taurus (Bovine).